Consider the following 954-residue polypeptide: Glycine dehydrogenase (decarboxylating) (954 aa).

Lys702 is subject to N6-(pyridoxal phosphate)lysine.

It belongs to the GcvP family. As to quaternary structure, the glycine cleavage system is composed of four proteins: P, T, L and H. Pyridoxal 5'-phosphate is required as a cofactor.

The catalysed reaction is N(6)-[(R)-lipoyl]-L-lysyl-[glycine-cleavage complex H protein] + glycine + H(+) = N(6)-[(R)-S(8)-aminomethyldihydrolipoyl]-L-lysyl-[glycine-cleavage complex H protein] + CO2. Functionally, the glycine cleavage system catalyzes the degradation of glycine. The P protein binds the alpha-amino group of glycine through its pyridoxal phosphate cofactor; CO(2) is released and the remaining methylamine moiety is then transferred to the lipoamide cofactor of the H protein. In Xanthomonas euvesicatoria pv. vesicatoria (strain 85-10) (Xanthomonas campestris pv. vesicatoria), this protein is Glycine dehydrogenase (decarboxylating).